Consider the following 291-residue polypeptide: Cell division protein ZipA (291 aa).

Over 1 to 5 (MQELR) the chain is Periplasmic. Residues 6-26 (FVLIIVGALAIAALLFHGLWT) form a helical membrane-spanning segment. Residues 27 to 291 (SKKEGKSKFG…QEFKVRAAQA (265 aa)) lie on the Cytoplasmic side of the membrane. The segment covering 29–51 (KEGKSKFGDKPLRKMKVESDDPP) has biased composition (basic and acidic residues). 2 disordered regions span residues 29 to 61 (KEGK…EDDF) and 92 to 119 (ELDE…VQPQ).

It belongs to the ZipA family. As to quaternary structure, interacts with FtsZ via their C-terminal domains.

The protein localises to the cell inner membrane. Its function is as follows. Essential cell division protein that stabilizes the FtsZ protofilaments by cross-linking them and that serves as a cytoplasmic membrane anchor for the Z ring. Also required for the recruitment to the septal ring of downstream cell division proteins. The polypeptide is Cell division protein ZipA (Vibrio cholerae serotype O1 (strain ATCC 39541 / Classical Ogawa 395 / O395)).